The sequence spans 377 residues: Glutamate 5-kinase (377 aa).

Lysine 22 is an ATP binding site. Residues serine 62, aspartate 149, and asparagine 161 each contribute to the substrate site. Residues 181–182 and 223–229 contribute to the ATP site; these read TD and TGGMVTK. In terms of domain architecture, PUA spans 285-363; sequence RGVLVADSGA…AQLRRLLGEE (79 aa).

It belongs to the glutamate 5-kinase family.

The protein localises to the cytoplasm. The enzyme catalyses L-glutamate + ATP = L-glutamyl 5-phosphate + ADP. The protein operates within amino-acid biosynthesis; L-proline biosynthesis; L-glutamate 5-semialdehyde from L-glutamate: step 1/2. Catalyzes the transfer of a phosphate group to glutamate to form L-glutamate 5-phosphate. The protein is Glutamate 5-kinase of Bifidobacterium animalis subsp. lactis (strain AD011).